Reading from the N-terminus, the 265-residue chain is Tryptophan synthase alpha chain (265 aa).

Catalysis depends on proton acceptor residues glutamate 48 and aspartate 59.

Belongs to the TrpA family. Tetramer of two alpha and two beta chains.

It carries out the reaction (1S,2R)-1-C-(indol-3-yl)glycerol 3-phosphate + L-serine = D-glyceraldehyde 3-phosphate + L-tryptophan + H2O. It participates in amino-acid biosynthesis; L-tryptophan biosynthesis; L-tryptophan from chorismate: step 5/5. Functionally, the alpha subunit is responsible for the aldol cleavage of indoleglycerol phosphate to indole and glyceraldehyde 3-phosphate. This Pelagibacter ubique (strain HTCC1062) protein is Tryptophan synthase alpha chain.